We begin with the raw amino-acid sequence, 796 residues long: Pleckstrin homology domain-containing family H member 3 (796 aa).

The first 18 residues, 1–18, serve as a signal peptide directing secretion; that stretch reads MPLPGGLWWLLCCRRGFT. The tract at residues 28-71 is disordered; the sequence is ELSGDGDEDEDDETFELRTPSPAGGGRGSLDVTLTQPTRNGPIS. The segment covering 29-41 has biased composition (acidic residues); sequence LSGDGDEDEDDET. Phosphoserine is present on serine 30. Over residues 59–68 the composition is skewed to polar residues; it reads VTLTQPTRNG. One can recognise a PH domain in the interval 95–199; the sequence is DIIVKGWLYR…WGVALREVIA (105 aa). The MyTH4 domain occupies 237 to 399; the sequence is HTSSALYAPL…PSLAEISALS (163 aa). One can recognise an FERM domain in the interval 404–757; the sequence is LLCTVHCPGA…ANPSPERPCR (354 aa). N-linked (GlcNAc...) asparagine glycosylation is present at asparagine 474. 2 disordered regions span residues 557–584 and 598–625; these read PLLDRLLPPPIPPREQPPCPTRRPPPSA and KRRAERARRGGTGRSTGSTAQVGGGGAS. Positions 563-583 are enriched in pro residues; it reads LPPPIPPREQPPCPTRRPPPS. A compositionally biased stretch (basic residues) spans 598–608; the sequence is KRRAERARRGG. Arginine 638 carries the omega-N-methylarginine modification. The segment at 750–796 is disordered; the sequence is PSPERPCRSGSSSGPPSQDLPDTSPPSQHQVLEEPQGQSGCLKQLQD. The span at 757–766 shows a compositional bias: low complexity; that stretch reads RSGSSSGPPS. The segment covering 774-796 has biased composition (polar residues); it reads PPSQHQVLEEPQGQSGCLKQLQD.

The chain is Pleckstrin homology domain-containing family H member 3 (Plekhh3) from Mus musculus (Mouse).